The sequence spans 268 residues: Glycine/sarcosine N-methyltransferase (268 aa).

S-adenosyl-L-methionine is bound by residues Tyr26, Trp34, Arg43, Ala67, Asp88, 114-115, and Leu132; that span reads DW. Substrate is bound by residues Asn134, Arg167, and Tyr206.

This sequence belongs to the class I-like SAM-binding methyltransferase superfamily. Glycine N-methyltransferase family. Monomer.

It carries out the reaction glycine + 2 S-adenosyl-L-methionine = N,N-dimethylglycine + 2 S-adenosyl-L-homocysteine + 2 H(+). It catalyses the reaction glycine + S-adenosyl-L-methionine = sarcosine + S-adenosyl-L-homocysteine + H(+). The catalysed reaction is sarcosine + S-adenosyl-L-methionine = N,N-dimethylglycine + S-adenosyl-L-homocysteine + H(+). Its pathway is amine and polyamine biosynthesis; betaine biosynthesis via glycine pathway; betaine from glycine: step 1/3. It functions in the pathway amine and polyamine biosynthesis; betaine biosynthesis via glycine pathway; betaine from glycine: step 2/3. Its activity is regulated as follows. p-chloromercuribenzoic acid inhibits more than 95% of the GSMT activities on glycine and sarcosine, and S-adenosylhomocysteine (AdoHcy) inhibits completely GSMT activities. Catalyzes the methylation of glycine and sarcosine to sarcosine and dimethylglycine, respectively, with S-adenosylmethionine (AdoMet) acting as the methyl donor. It has strict specificity for glycine and sarcosine as the methyl group acceptors. The protein is Glycine/sarcosine N-methyltransferase of Halorhodospira halochloris (Ectothiorhodospira halochloris).